A 179-amino-acid polypeptide reads, in one-letter code: Large ribosomal subunit protein uL5 (179 aa).

Belongs to the universal ribosomal protein uL5 family. As to quaternary structure, part of the 50S ribosomal subunit; part of the 5S rRNA/L5/L18/L25 subcomplex. Contacts the 5S rRNA and the P site tRNA. Forms a bridge to the 30S subunit in the 70S ribosome.

Functionally, this is one of the proteins that bind and probably mediate the attachment of the 5S RNA into the large ribosomal subunit, where it forms part of the central protuberance. In the 70S ribosome it contacts protein S13 of the 30S subunit (bridge B1b), connecting the 2 subunits; this bridge is implicated in subunit movement. Contacts the P site tRNA; the 5S rRNA and some of its associated proteins might help stabilize positioning of ribosome-bound tRNAs. The protein is Large ribosomal subunit protein uL5 of Pseudomonas aeruginosa (strain LESB58).